Consider the following 222-residue polypeptide: MKLSLSQPCSFSGALLLLAVSNLLVWEKVTSLPNYRLPTESLYQRVIVVSHNAHDLASKAFMEFEMKFGRTAWTYGLMLSPCHTAAILTPENSEQVHQTTSEDLLKVSITILQAWEEPLKHMVAAVAALPHVPDTLLSRTKELEERIQGLLEGLKIIFNRVYPGAVASDYTFWSAWSDLQSSDESTKNSALRTLWRCVRRDTHKVDNYLKVLKCRDVHNNNC.

The N-terminal stretch at 1-31 (MKLSLSQPCSFSGALLLLAVSNLLVWEKVTS) is a signal peptide. Disulfide bonds link Cys-82–Cys-197 and Cys-214–Cys-222.

The protein belongs to the somatotropin/prolactin family.

It is found in the secreted. The polypeptide is Prolactin-3B1 (Prl3b1) (Mus musculus (Mouse)).